The chain runs to 237 residues: tRNA1(Val) (adenine(37)-N6)-methyltransferase (237 aa).

It belongs to the methyltransferase superfamily. tRNA (adenine-N(6)-)-methyltransferase family.

The protein localises to the cytoplasm. It catalyses the reaction adenosine(37) in tRNA1(Val) + S-adenosyl-L-methionine = N(6)-methyladenosine(37) in tRNA1(Val) + S-adenosyl-L-homocysteine + H(+). Functionally, specifically methylates the adenine in position 37 of tRNA(1)(Val) (anticodon cmo5UAC). The sequence is that of tRNA1(Val) (adenine(37)-N6)-methyltransferase from Tolumonas auensis (strain DSM 9187 / NBRC 110442 / TA 4).